A 781-amino-acid polypeptide reads, in one-letter code: Catenin beta-1 (781 aa).

Residues Gly-34 to Asp-56 are disordered. 10 ARM repeats span residues Asn-141–Lys-180, Arg-225–Leu-264, Glu-267–Tyr-306, Ser-351–Asp-390, Ala-391–Cys-429, Tyr-432–Ser-473, Glu-479–Leu-519, Pro-521–Glu-562, Ile-584–Gln-623, and Lys-625–Glu-664. Positions Met-735 to Gly-745 are enriched in basic and acidic residues. Residues Met-735–Leu-781 form a disordered region.

This sequence belongs to the beta-catenin family. In terms of assembly, interacts with EP-Cadherin/CDH3. Interacts with custos; the interaction is positively regulated by Wnt stimulation. In terms of processing, phosphorylation by gsk3b promotes ubiquitination and subsequent degradation by the proteasome. Post-translationally, ubiquitinated when phosphorylated by gsk3b, leading to its degradation. Expressed at intercalated disks in the heart (at protein level).

Its subcellular location is the cytoplasm. It localises to the nucleus. The protein localises to the cell membrane. Its function is as follows. Key downstream component of the canonical Wnt signaling pathway. In the absence of Wnt, forms a complex with axin1, axin2, apc, csnk1a1 and gsk3b that promotes phosphorylation on N-terminal Ser and Thr residues and ubiquitination of ctnnb1 and its subsequent degradation by the proteasome. In the presence of Wnt ligand, ctnnb1 is not ubiquitinated and accumulates in the nucleus, where it acts as a coactivator for transcription factors of the TCF/LEF family, leading to activate Wnt responsive genes. Plays a key role in dorsoventral patterning: in prospective ventral blastomeres, its down-regulation by axin1 and axin2 leads to inhibit the Wnt signaling pathway, while in prospective dorsal blastomeres, degradation of axin results in stabilization and nuclear translocation of ctnnb1. The protein is Catenin beta-1 of Xenopus laevis (African clawed frog).